The following is a 251-amino-acid chain: DNA repair protein RecO (251 aa).

Belongs to the RecO family.

Functionally, involved in DNA repair and RecF pathway recombination. This Acidiphilium cryptum (strain JF-5) protein is DNA repair protein RecO.